Consider the following 294-residue polypeptide: Elongation factor Ts (294 aa).

The tract at residues 82 to 85 (TDFV) is involved in Mg(2+) ion dislocation from EF-Tu.

Belongs to the EF-Ts family.

The protein localises to the cytoplasm. Associates with the EF-Tu.GDP complex and induces the exchange of GDP to GTP. It remains bound to the aminoacyl-tRNA.EF-Tu.GTP complex up to the GTP hydrolysis stage on the ribosome. The chain is Elongation factor Ts from Nitrosomonas eutropha (strain DSM 101675 / C91 / Nm57).